An 84-amino-acid chain; its full sequence is Putative membrane protein insertion efficiency factor (84 aa).

It belongs to the UPF0161 family.

It localises to the cell inner membrane. Functionally, could be involved in insertion of integral membrane proteins into the membrane. This chain is Putative membrane protein insertion efficiency factor, found in Shewanella denitrificans (strain OS217 / ATCC BAA-1090 / DSM 15013).